The primary structure comprises 564 residues: Keratin, type II cytoskeletal 6B (564 aa).

The segment covering 1–11 (MASTSTTIRSH) has biased composition (low complexity). The segment at 1 to 23 (MASTSTTIRSHSSSRRGFSANSA) is disordered. The residue at position 2 (Ala-2) is an N-acetylalanine. The segment at 2 to 162 (ASTSTTIRSH…DPAIQRVRAE (161 aa)) is head. The interval 163-198 (EREQIKTLNNKFASFIDKVRFLEQQNKVLDTKWTLL) is coil 1A. An IF rod domain is found at 163 to 476 (EREQIKTLNN…KLLEGEECRL (314 aa)). The tract at residues 199–217 (QEQGTKTVRQNLEPLFEQY) is linker 1. A coil 1B region spans residues 218–309 (INNLRRQLDN…ALYDAELSQM (92 aa)). Residues 310 to 333 (QTHISDTSVVLSMDNNRNLDLDSI) are linker 12. The tract at residues 334 to 472 (IAEVKAQYEE…ATYRKLLEGE (139 aa)) is coil 2. The tail stretch occupies residues 473–564 (ECRLNGEGVG…SSSSRKSYKH (92 aa)). The segment at 533–564 (RATGGGLSSVGGGSSTIKYTTTSSSSRKSYKH) is disordered. Gly residues predominate over residues 534-546 (ATGGGLSSVGGGS). The segment covering 547-564 (STIKYTTTSSSSRKSYKH) has biased composition (low complexity).

Belongs to the intermediate filament family. In terms of assembly, heterodimer of a type I and a type II keratin. KRT6 isomers associate with KRT16 and/or KRT17. In terms of tissue distribution, constitutively expressed in distinct types of epithelia such as those in oral mucosa, esophagus, papillae of tongue and hair follicle outer root sheath.

The polypeptide is Keratin, type II cytoskeletal 6B (KRT6B) (Homo sapiens (Human)).